The primary structure comprises 1104 residues: Reverse gyrase (1104 aa).

The RG N-terminal-type zinc-finger motif lies at 1-39; it reads MAVNSKYHHSCINCGGLNTDERNERGLPCEVCLPEDSPS. 4 residues coordinate Zn(2+): Cys11, Cys14, Cys29, and Cys32. 8 residues coordinate ADP: Phe75, Asp78, Gln83, Gly103, Gly105, Lys106, Thr107, and Thr108. Residues Gln83 and 100–107 each bind ATP; that span reads APTGVGKT. Positions 87 to 242 constitute a Helicase ATP-binding domain; the sequence is AKRIVQGKSF…FSTIKQGKIY (156 aa). A DEAD box motif is present at residues 203–206; it reads DDVD. The segment at 223 to 250 is insert region; sequence GIPEEIIRKAFSTIKQGKIYERPKNLKP. Residues 300–522 enclose the Helicase C-terminal domain; sequence KLVELLEIFR…EAEANWKELV (223 aa). The tract at residues 390-460 is latch region; sequence RFSLELDKAP…KDEDLELIIP (71 aa). The interval 538–1104 is topoisomerase I; that stretch reads DTSRSLLIIV…EEIKSLMEEG (567 aa). Residues 542–699 form the Toprim domain; it reads SLLIIVESPT…SLRRIEMHEI (158 aa). Mg(2+) is bound at residue Glu548. The RG C-terminal-type zinc-finger motif lies at 618–645; the sequence is LKRCRDCGYQFTEDRDECPVCSSKNIDD. Zn(2+) contacts are provided by Cys621, Cys624, Cys635, and Cys638. Residue Asp668 participates in Mg(2+) binding. The region spanning 715-1101 is the Topo IA-type catalytic domain; the sequence is DFNLVKAQIV…LLYEEIKSLM (387 aa). The active-site O-(5'-phospho-DNA)-tyrosine intermediate is the Tyr851.

The protein in the N-terminal section; belongs to the DEAD box helicase family. DDVD subfamily. This sequence in the C-terminal section; belongs to the type IA topoisomerase family. In terms of assembly, monomer. Requires Zn(2+) as cofactor. Mg(2+) serves as cofactor.

It localises to the cytoplasm. The catalysed reaction is ATP + H2O = ADP + phosphate + H(+). Modifies the topological state of DNA by introducing positive supercoils in an ATP-dependent process. Increases the linking number in steps of +1. Probably recognizes regions with a low GC content which melt and form a ssDNA bubble, allowing the enzyme to bind and cleave the DNA prior to strand passage; the bubble is probably cleaved by 2 reverse gyrase molecules, one on each strand. Positively supercoils DNA with all NTPS, although it strongly prefers ATP. In the presence of non-hydrolyzable ATP analogs it partially relaxes negative supercoils. Has an intrinsic ATPase activity that is stimulated by DNA; ssDNA is most effective. Binds to single-stranded DNA, transiently cleaves and then rejoins the ends, introducing a positive supercoil in the process. The scissile phosphodiester is attacked by the catalytic tyrosine of the enzyme, resulting in the formation of a DNA-(5'-phosphotyrosyl)-enzyme intermediate. The helicase-like domain is a nucleotide-dependent switch that alternates between a physically closed ATP-bound state with a slight preference for dsDNA, and an open ADP-bound state with a high preference for ssDNA. Whole enzyme has a very poor (k-unwind=0.001 sec(-1)) non-processive helicase activity in the 3'-5' direction that works on short substrates, while the isolated helicase domain has a slightly better helicase activity that works in both directions. Probably involved in rewinding DNA strands in regions of the chromosome that have opened up to allow replication, transcription, DNA repair and/or for DNA protection. The protein is Reverse gyrase of Thermotoga maritima (strain ATCC 43589 / DSM 3109 / JCM 10099 / NBRC 100826 / MSB8).